The chain runs to 126 residues: UPF0231 protein VC0395_A0134/VC395_0622 (126 aa).

This sequence belongs to the UPF0231 family.

This chain is UPF0231 protein VC0395_A0134/VC395_0622, found in Vibrio cholerae serotype O1 (strain ATCC 39541 / Classical Ogawa 395 / O395).